Here is a 435-residue protein sequence, read N- to C-terminus: Serine--tRNA ligase (435 aa).

238–240 (TAE) contributes to the L-serine binding site. 269 to 271 (RAE) provides a ligand contact to ATP. E292 serves as a coordination point for L-serine. Residue 356–359 (EISS) coordinates ATP. S392 lines the L-serine pocket.

The protein belongs to the class-II aminoacyl-tRNA synthetase family. Type-1 seryl-tRNA synthetase subfamily. Homodimer. The tRNA molecule binds across the dimer.

The protein resides in the cytoplasm. It carries out the reaction tRNA(Ser) + L-serine + ATP = L-seryl-tRNA(Ser) + AMP + diphosphate + H(+). The catalysed reaction is tRNA(Sec) + L-serine + ATP = L-seryl-tRNA(Sec) + AMP + diphosphate + H(+). It functions in the pathway aminoacyl-tRNA biosynthesis; selenocysteinyl-tRNA(Sec) biosynthesis; L-seryl-tRNA(Sec) from L-serine and tRNA(Sec): step 1/1. Its function is as follows. Catalyzes the attachment of serine to tRNA(Ser). Is also able to aminoacylate tRNA(Sec) with serine, to form the misacylated tRNA L-seryl-tRNA(Sec), which will be further converted into selenocysteinyl-tRNA(Sec). In Methylobacterium sp. (strain 4-46), this protein is Serine--tRNA ligase.